We begin with the raw amino-acid sequence, 255 residues long: F-box/SPRY domain-containing protein 1 (255 aa).

Residues aspartate 3–histidine 51 form the F-box domain. The region spanning methionine 61 to leucine 253 is the B30.2/SPRY domain.

This sequence belongs to the FBXO45/Fsn family. Component of an E3 ubiquitin ligase complex composed of hiw and Fsn.

It is found in the synapse. Its pathway is protein modification; protein ubiquitination. Required in the presynaptic motoneuron to down-regulate the levels of wnd and restrain synaptic terminal growth at the neuromuscular junction (NMJ). The sequence is that of F-box/SPRY domain-containing protein 1 from Drosophila willistoni (Fruit fly).